The primary structure comprises 59 residues: MNIQRAKELSVSAEQANVSFQGMPVMIQHVDESNETARIYEVKNPGRELTVPVNSLEEI.

The protein belongs to the SspH family.

The protein resides in the spore core. The protein is Small, acid-soluble spore protein H 2 (sspH2) of Bacillus anthracis.